The following is a 250-amino-acid chain: NAD-dependent protein deacetylase (250 aa).

Residues 1–244 form the Deacetylase sirtuin-type domain; that stretch reads MECDKVGDLL…PCVVDYIKSQ (244 aa). Positions 22, 26, 33, 34, 98, 100, 101, and 116 each coordinate NAD(+). Phe-33 serves as a coordination point for nicotinamide. Residues Ile-100 and Asp-101 each contribute to the nicotinamide site. His-116 (proton acceptor) is an active-site residue. The Zn(2+) site is built by Cys-124, Cys-127, Cys-149, and Cys-151. NAD(+) is bound by residues Ser-187, Ser-188, Asn-212, and Val-230.

It belongs to the sirtuin family. Class U subfamily. It depends on Zn(2+) as a cofactor.

It localises to the cytoplasm. The catalysed reaction is N(6)-acetyl-L-lysyl-[protein] + NAD(+) + H2O = 2''-O-acetyl-ADP-D-ribose + nicotinamide + L-lysyl-[protein]. Its function is as follows. NAD-dependent protein deacetylase which modulates the activities of several enzymes which are inactive in their acetylated form. Deacetylates the N-terminal lysine residue of Alba, the major archaeal chromatin protein and that, in turn, increases Alba's DNA binding affinity, thereby repressing transcription. In Sulfurisphaera tokodaii (strain DSM 16993 / JCM 10545 / NBRC 100140 / 7) (Sulfolobus tokodaii), this protein is NAD-dependent protein deacetylase.